Consider the following 1494-residue polypeptide: ABC multidrug transporter atrG (1494 aa).

Residues 1-11 are compositionally biased toward polar residues; sequence MSLLGTINPNL. 2 disordered regions span residues 1–48 and 84–105; these read MSLL…RTSD and FSVS…TLNP. N-linked (GlcNAc...) asparagine glycosylation occurs at N41. Residues N141 and N340 are each glycosylated (N-linked (GlcNAc...) asparagine). An ABC transporter 1 domain is found at 162 to 416; the sequence is LQVGALFRAV…FTTMGFECPE (255 aa). 2 helical membrane-spanning segments follow: residues 527–547 and 561–581; these read LTMS…SVFY and ALLF…ILTL. The N-linked (GlcNAc...) asparagine glycan is linked to N622. The next 3 membrane-spanning stretches (helical) occupy residues 636–656, 669–689, and 778–798; these read GPFF…SMLF, ALVP…FTIP, and GIMF…TEYI. An N-linked (GlcNAc...) asparagine glycan is attached at N835. The 244-residue stretch at 852–1095 folds into the ABC transporter 2 domain; that stretch reads FHWQDVCYDI…LASYFERNGA (244 aa). Position 888–895 (888–895) interacts with ATP; it reads GVSGAGKT. Transmembrane regions (helical) follow at residues 1191 to 1211, 1227 to 1247, 1276 to 1296, 1312 to 1332, and 1351 to 1371; these read YIYS…FSFF, IFML…NFVT, LPWN…PIGL, LMWL…HMMI, and LCLI…FWIF. N-linked (GlcNAc...) asparagine glycosylation is found at N1410 and N1432. A helical transmembrane segment spans residues 1463 to 1483; that stretch reads FGIMWAFIVFNIAAAVFIYWL.

It belongs to the ABC transporter superfamily. ABCG family. PDR (TC 3.A.1.205) subfamily.

Its subcellular location is the cell membrane. The enzyme catalyses (R)-miconazole(in) + ATP + H2O = (R)-miconazole(out) + ADP + phosphate + H(+). Pleiotropic ABC efflux transporter involved in the basal level of azole susceptibility. Confers resistance to miconazole and clotrimazole. The protein is ABC multidrug transporter atrG of Aspergillus oryzae (strain ATCC 42149 / RIB 40) (Yellow koji mold).